The primary structure comprises 100 residues: NADH-quinone oxidoreductase subunit K 2 (100 aa).

The next 3 membrane-spanning stretches (helical) occupy residues 4–24 (LWWYIVLGVVLFVIGAAGVLI), 28–48 (ILVVLMSLELLLNSVNINFIA), and 60–80 (IFAIFVIAITAAEVAVALGIL).

It belongs to the complex I subunit 4L family. As to quaternary structure, NDH-1 is composed of 14 different subunits. Subunits NuoA, H, J, K, L, M, N constitute the membrane sector of the complex.

The protein localises to the cell inner membrane. It carries out the reaction a quinone + NADH + 5 H(+)(in) = a quinol + NAD(+) + 4 H(+)(out). Functionally, NDH-1 shuttles electrons from NADH, via FMN and iron-sulfur (Fe-S) centers, to quinones in the respiratory chain. The immediate electron acceptor for the enzyme in this species is believed to be ubiquinone. Couples the redox reaction to proton translocation (for every two electrons transferred, four hydrogen ions are translocated across the cytoplasmic membrane), and thus conserves the redox energy in a proton gradient. The chain is NADH-quinone oxidoreductase subunit K 2 from Rhizobium etli (strain ATCC 51251 / DSM 11541 / JCM 21823 / NBRC 15573 / CFN 42).